We begin with the raw amino-acid sequence, 456 residues long: F-box/FBD/LRR-repeat protein At1g13780 (456 aa).

Positions 9 to 55 constitute an F-box domain; that stretch reads FDRISELPESLISQILLHLPTKASVKTSVLSTRWKNLWLNVPGLDLN. 4 LRR repeats span residues 197–220, 243–266, 302–325, and 355–379; these read LEELIYLHDDKLVVTRVRSRSLKR, APGLEYMSLKADHFDRIVVKNLTS, ISSVRHMVISHNTVKALDLYSKVG, and FPNLKHLILETECPVEVMEKFELVN. Positions 372–424 constitute an FBD domain; the sequence is MEKFELVNVPRCFVSTLEHVEIKGLFDWGEQDMKIASYFLENSAVLKKLILSF.

This chain is F-box/FBD/LRR-repeat protein At1g13780, found in Arabidopsis thaliana (Mouse-ear cress).